The primary structure comprises 394 residues: 1-deoxy-D-xylulose 5-phosphate reductoisomerase (394 aa).

NADPH-binding residues include Thr13, Gly14, Ser15, Val16, Arg40, Gln41, and Asn127. Position 128 (Lys128) interacts with 1-deoxy-D-xylulose 5-phosphate. Glu129 serves as a coordination point for NADPH. Position 153 (Asp153) interacts with Mn(2+). 4 residues coordinate 1-deoxy-D-xylulose 5-phosphate: Ser154, Glu155, Ser184, and His207. Residue Glu155 coordinates Mn(2+). NADPH is bound at residue Gly213. Ser220, Asn225, Lys226, and Glu229 together coordinate 1-deoxy-D-xylulose 5-phosphate. Glu229 is a Mn(2+) binding site.

Belongs to the DXR family. The cofactor is Mg(2+). It depends on Mn(2+) as a cofactor.

The catalysed reaction is 2-C-methyl-D-erythritol 4-phosphate + NADP(+) = 1-deoxy-D-xylulose 5-phosphate + NADPH + H(+). It functions in the pathway isoprenoid biosynthesis; isopentenyl diphosphate biosynthesis via DXP pathway; isopentenyl diphosphate from 1-deoxy-D-xylulose 5-phosphate: step 1/6. Catalyzes the NADPH-dependent rearrangement and reduction of 1-deoxy-D-xylulose-5-phosphate (DXP) to 2-C-methyl-D-erythritol 4-phosphate (MEP). This chain is 1-deoxy-D-xylulose 5-phosphate reductoisomerase, found in Chromobacterium violaceum (strain ATCC 12472 / DSM 30191 / JCM 1249 / CCUG 213 / NBRC 12614 / NCIMB 9131 / NCTC 9757 / MK).